The sequence spans 238 residues: Ribosomal RNA small subunit methyltransferase G (238 aa).

S-adenosyl-L-methionine contacts are provided by residues glycine 75, leucine 80, 126–127, and arginine 142; that span reads AE.

The protein belongs to the methyltransferase superfamily. RNA methyltransferase RsmG family.

The protein resides in the cytoplasm. Specifically methylates the N7 position of guanine in position 518 of 16S rRNA. The chain is Ribosomal RNA small subunit methyltransferase G from Streptomyces avermitilis (strain ATCC 31267 / DSM 46492 / JCM 5070 / NBRC 14893 / NCIMB 12804 / NRRL 8165 / MA-4680).